A 130-amino-acid polypeptide reads, in one-letter code: Small ribosomal subunit protein uS9 (130 aa).

Belongs to the universal ribosomal protein uS9 family.

The chain is Small ribosomal subunit protein uS9 from Streptococcus equi subsp. equi (strain 4047).